A 92-amino-acid chain; its full sequence is Small ribosomal subunit protein bS21A (92 aa).

A compositionally biased stretch (basic and acidic residues) spans 25–52 (GVFREMKQRRSYEKPSERKTREKSEAIR). The interval 25-92 (GVFREMKQRR…LPQTAARPAG (68 aa)) is disordered.

This sequence belongs to the bacterial ribosomal protein bS21 family.

This is Small ribosomal subunit protein bS21A from Bradyrhizobium diazoefficiens (strain JCM 10833 / BCRC 13528 / IAM 13628 / NBRC 14792 / USDA 110).